The sequence spans 117 residues: Large ribosomal subunit protein bL20 (117 aa).

Belongs to the bacterial ribosomal protein bL20 family.

Functionally, binds directly to 23S ribosomal RNA and is necessary for the in vitro assembly process of the 50S ribosomal subunit. It is not involved in the protein synthesizing functions of that subunit. The chain is Large ribosomal subunit protein bL20 from Pelobacter propionicus (strain DSM 2379 / NBRC 103807 / OttBd1).